The chain runs to 129 residues: uncharacterized protein (129 aa).

3 helical membrane-spanning segments follow: residues 49–69, 72–92, and 101–118; these read LWSL…IVGV, FTIF…NLIF, and YFNC…NLLQ.

The protein resides in the membrane. This is an uncharacterized protein from Saccharomyces cerevisiae (strain ATCC 204508 / S288c) (Baker's yeast).